The chain runs to 256 residues: tRNA-cytidine(32) 2-sulfurtransferase (256 aa).

The short motif at 35–40 is the PP-loop motif element; sequence SGGKDS. [4Fe-4S] cluster is bound by residues Cys110, Cys113, and Cys201.

This sequence belongs to the TtcA family. Homodimer. Requires Mg(2+) as cofactor. [4Fe-4S] cluster serves as cofactor.

It is found in the cytoplasm. It catalyses the reaction cytidine(32) in tRNA + S-sulfanyl-L-cysteinyl-[cysteine desulfurase] + AH2 + ATP = 2-thiocytidine(32) in tRNA + L-cysteinyl-[cysteine desulfurase] + A + AMP + diphosphate + H(+). It functions in the pathway tRNA modification. In terms of biological role, catalyzes the ATP-dependent 2-thiolation of cytidine in position 32 of tRNA, to form 2-thiocytidine (s(2)C32). The sulfur atoms are provided by the cysteine/cysteine desulfurase (IscS) system. The chain is tRNA-cytidine(32) 2-sulfurtransferase from Coxiella burnetii (strain RSA 331 / Henzerling II).